Here is a 206-residue protein sequence, read N- to C-terminus: Carbonic anhydrase (206 aa).

Lysine 11 is covalently cross-linked (Isoglutamyl lysine isopeptide (Lys-Gln) (interchain with Q-Cter in protein Pup)). Zn(2+) contacts are provided by cysteine 51, aspartate 53, histidine 104, and cysteine 107.

The protein belongs to the beta-class carbonic anhydrase family. As to quaternary structure, homotetramer. Requires Zn(2+) as cofactor.

It catalyses the reaction hydrogencarbonate + H(+) = CO2 + H2O. Functionally, catalyzes the reversible hydration of carbon dioxide to form bicarbonate. This chain is Carbonic anhydrase (cynT), found in Mycolicibacterium smegmatis (strain ATCC 700084 / mc(2)155) (Mycobacterium smegmatis).